The following is a 988-amino-acid chain: uncharacterized protein (988 aa).

Positions 1–17 (MIRLVFLFLLVVLSVEL) are cleaved as a signal peptide. The interval 111–176 (YQNPSTFPST…SKLNQKSSKS (66 aa)) is disordered. The span at 114 to 140 (PSTFPSTTTASTTTSTTTMPPTYQTTT) shows a compositional bias: low complexity. N-linked (GlcNAc...) asparagine glycans are attached at residues Asn247, Asn389, Asn529, and Asn601. A helical transmembrane segment spans residues 690 to 710 (IMIFTIFSVLSALTCLMCMYL). Asn720 carries an N-linked (GlcNAc...) asparagine glycan. Helical transmembrane passes span 721-741 (LTAV…AFII), 753-773 (LLFP…TVLI), 784-804 (VLIA…WLLL), 832-852 (MILL…IFAL), 864-884 (LMIS…LPLI), and 891-911 (TVMA…SHTG). The disordered stretch occupies residues 966-988 (RSEDTLRRNTSLYGTEGYELPTP). The N-linked (GlcNAc...) asparagine glycan is linked to Asn974.

The protein localises to the membrane. This is an uncharacterized protein from Caenorhabditis elegans.